We begin with the raw amino-acid sequence, 173 residues long: MVDSYDDAFDGEKSKTQIKRELHALVELGERLTTVKADTLARLPLTDELRKALAEACKHTAHGARKRHMSFVGKLMRDQDLDAIHAVLEQIDSSSRQYNERFHNLERWRDRLIDGNDEDLERFVNEYPDTDRQQLRSLIRHAQHEKARNKPPAAARKVFKYIRDLDELQRGLR.

It belongs to the DarP family.

It is found in the cytoplasm. In terms of biological role, member of a network of 50S ribosomal subunit biogenesis factors which assembles along the 30S-50S interface, preventing incorrect 23S rRNA structures from forming. Promotes peptidyl transferase center (PTC) maturation. In Pseudomonas putida (strain W619), this protein is Dual-action ribosomal maturation protein DarP.